A 674-amino-acid chain; its full sequence is Endopolyphosphatase (674 aa).

Residues 1–21 are Cytoplasmic-facing; the sequence is MVVVGKSEVRNVSMSRPKKKS. 2 propeptides (removed in mature form) span residues 1-83 and 385-674; these read MVVV…VIIK and EQST…YKDD. Residue Lys-6 forms a Glycyl lysine isopeptide (Lys-Gly) (interchain with G-Cter in ubiquitin) linkage. The chain crosses the membrane as a helical; Signal-anchor for type II membrane protein span at residues 22–42; it reads LIAILSTCVLFFLVFIIGAKF. At 43–674 the chain is on the vacuolar side; the sequence is QYVSVFSKFL…SFASSGYKDD (632 aa). The N-linked (GlcNAc...) asparagine glycan is linked to Asn-58. The disordered stretch occupies residues 384-403; sequence MEQSTRVQQGEDSNEEDEET. N-linked (GlcNAc...) asparagine glycosylation is found at Asn-505 and Asn-511.

The protein belongs to the endopolyphosphatase PPN1 family. In terms of assembly, homotetramer. Interacts with PPN2. Requires Mn(2+) as cofactor. Mg(2+) is required as a cofactor. The cofactor is Co(2+). It depends on Zn(2+) as a cofactor. In terms of processing, processing by proteases in the vacuole is required for activation. Post-translationally, ubiquitinated. Ubiquitination mediates sorting into internal vesicles in late endosomes. TUL1 and RSP5 are required for ubiquitination. Other cytoplasmic Lys residues than Lys-6 may also be ubiquitinated. N-glycosylated. N-glycosylation is essential for the protease-mediated maturation.

It is found in the vacuole membrane. It localises to the cytoplasm. The catalysed reaction is [phosphate](n+1) + n H2O = (n+1) phosphate + n H(+). It catalyses the reaction [phosphate](n) + H2O = [phosphate](n-1) + phosphate + H(+). The enzyme catalyses dATP + H2O = dADP + phosphate + H(+). Inhibited by heparin and EDTA. Functionally, catalyzes the hydrolysis of inorganic polyphosphate (polyP) chains of many hundreds of phosphate residues into shorter lengths. Has both exopolyphosphatase and endopolyphosphatase activities at different ratios depending on divalent cations by cleaving phosphate from the chain end and by fragmenting long-chain polymers into shorter ones, respectively. The limited digestion products are 1 and 3 P(i) residues. Also releases phosphate from dATP. dATP phosphohydrolase activity is about 7-fold lower than the exopolyphosphatase activity. The protein is Endopolyphosphatase of Saccharomyces cerevisiae (strain ATCC 204508 / S288c) (Baker's yeast).